The following is a 165-amino-acid chain: 6,7-dimethyl-8-ribityllumazine synthase (165 aa).

Residues Phe-24, 62 to 64, and 86 to 88 each bind 5-amino-6-(D-ribitylamino)uracil; these read AFE and AVI. 91-92 is a binding site for (2S)-2-hydroxy-3-oxobutyl phosphate; that stretch reads DT. His-94 serves as the catalytic Proton donor. A 5-amino-6-(D-ribitylamino)uracil-binding site is contributed by Phe-119. Arg-133 serves as a coordination point for (2S)-2-hydroxy-3-oxobutyl phosphate.

It belongs to the DMRL synthase family.

The catalysed reaction is (2S)-2-hydroxy-3-oxobutyl phosphate + 5-amino-6-(D-ribitylamino)uracil = 6,7-dimethyl-8-(1-D-ribityl)lumazine + phosphate + 2 H2O + H(+). The protein operates within cofactor biosynthesis; riboflavin biosynthesis; riboflavin from 2-hydroxy-3-oxobutyl phosphate and 5-amino-6-(D-ribitylamino)uracil: step 1/2. In terms of biological role, catalyzes the formation of 6,7-dimethyl-8-ribityllumazine by condensation of 5-amino-6-(D-ribitylamino)uracil with 3,4-dihydroxy-2-butanone 4-phosphate. This is the penultimate step in the biosynthesis of riboflavin. The sequence is that of 6,7-dimethyl-8-ribityllumazine synthase from Prochlorococcus marinus (strain MIT 9313).